A 275-amino-acid chain; its full sequence is Glucan endo-1,3-beta-glucosidase, acidic isoform PR-N (275 aa).

Catalysis depends on glutamate 196, which acts as the Nucleophile.

This sequence belongs to the glycosyl hydrolase 17 family. Post-translationally, the N-terminus is blocked.

Its subcellular location is the secreted. The protein localises to the extracellular space. It catalyses the reaction Hydrolysis of (1-&gt;3)-beta-D-glucosidic linkages in (1-&gt;3)-beta-D-glucans.. Implicated in the defense of plants against pathogens. This is Glucan endo-1,3-beta-glucosidase, acidic isoform PR-N (PRN) from Nicotiana tabacum (Common tobacco).